Reading from the N-terminus, the 132-residue chain is Small ribosomal subunit protein uS8 (132 aa).

This sequence belongs to the universal ribosomal protein uS8 family. As to quaternary structure, part of the 30S ribosomal subunit. Contacts proteins S5 and S12.

One of the primary rRNA binding proteins, it binds directly to 16S rRNA central domain where it helps coordinate assembly of the platform of the 30S subunit. This is Small ribosomal subunit protein uS8 from Mycoplasmopsis pulmonis (strain UAB CTIP) (Mycoplasma pulmonis).